Reading from the N-terminus, the 350-residue chain is Histidinol-phosphate aminotransferase 2 (350 aa).

The residue at position 210 (Lys-210) is an N6-(pyridoxal phosphate)lysine.

Belongs to the class-II pyridoxal-phosphate-dependent aminotransferase family. Histidinol-phosphate aminotransferase subfamily. In terms of assembly, homodimer. The cofactor is pyridoxal 5'-phosphate.

The enzyme catalyses L-histidinol phosphate + 2-oxoglutarate = 3-(imidazol-4-yl)-2-oxopropyl phosphate + L-glutamate. It functions in the pathway amino-acid biosynthesis; L-histidine biosynthesis; L-histidine from 5-phospho-alpha-D-ribose 1-diphosphate: step 7/9. This Mannheimia succiniciproducens (strain KCTC 0769BP / MBEL55E) protein is Histidinol-phosphate aminotransferase 2.